Reading from the N-terminus, the 99-residue chain is Integration host factor subunit alpha (99 aa).

The tract at residues Phe-49–Ile-73 is disordered.

The protein belongs to the bacterial histone-like protein family. As to quaternary structure, heterodimer of an alpha and a beta chain.

In terms of biological role, this protein is one of the two subunits of integration host factor, a specific DNA-binding protein that functions in genetic recombination as well as in transcriptional and translational control. This Serratia marcescens protein is Integration host factor subunit alpha (ihfA).